The chain runs to 932 residues: Glycine dehydrogenase (decarboxylating) (932 aa).

Position 685 is an N6-(pyridoxal phosphate)lysine (K685).

The protein belongs to the GcvP family. As to quaternary structure, the glycine cleavage system is composed of four proteins: P, T, L and H. Requires pyridoxal 5'-phosphate as cofactor.

The enzyme catalyses N(6)-[(R)-lipoyl]-L-lysyl-[glycine-cleavage complex H protein] + glycine + H(+) = N(6)-[(R)-S(8)-aminomethyldihydrolipoyl]-L-lysyl-[glycine-cleavage complex H protein] + CO2. Its function is as follows. The glycine cleavage system catalyzes the degradation of glycine. The P protein binds the alpha-amino group of glycine through its pyridoxal phosphate cofactor; CO(2) is released and the remaining methylamine moiety is then transferred to the lipoamide cofactor of the H protein. This Brucella melitensis biotype 2 (strain ATCC 23457) protein is Glycine dehydrogenase (decarboxylating).